A 486-amino-acid chain; its full sequence is Cobyric acid synthase (486 aa).

One can recognise a GATase cobBQ-type domain in the interval 248 to 439; the sequence is VLRIVVPALP…LHGLFDTPHA (192 aa). Residue Cys328 is the Nucleophile of the active site. His431 is an active-site residue.

The protein belongs to the CobB/CobQ family. CobQ subfamily.

Its pathway is cofactor biosynthesis; adenosylcobalamin biosynthesis. Catalyzes amidations at positions B, D, E, and G on adenosylcobyrinic A,C-diamide. NH(2) groups are provided by glutamine, and one molecule of ATP is hydrogenolyzed for each amidation. This Burkholderia mallei (strain ATCC 23344) protein is Cobyric acid synthase.